The sequence spans 362 residues: MKKIQTFIQTSPVCSYTEWDLLEEIIVGVVDGACIPPWHAAMEPCLPTQQHQFFRDNAGKPFPQERIDLARKELDEFARILECEGVKVRRPEPKNQSLVYGAPGWSSTGMYAAMPRDVLLVVGTDIIECPLAWRSRYFETAAYKKLLKEYFHGGAKWSSGPKPELSDEQYVDGWVEDEAATSANLVITEFEPTFDAADFTRLGKDIIAQKSNVTNEFGINWLQRHLGDDYKIHVLEFNDMHPMHIDATLVPLAPGKLLINPERVQKMPEIFRGWDAIHAPKPIMPDSHPLYMTSKWINMNILMLDERRVVVERQDEPMIKAMKGAGFEPILCDFRNFNSFGGSFHCATVDIRRRGKLESYLV.

Catalysis depends on residues aspartate 195 and histidine 244. Residue cysteine 346 is the Amidino-cysteine intermediate of the active site.

The protein belongs to the amidinotransferase family.

The catalysed reaction is L-lysine + L-arginine = L-homoarginine + L-ornithine. It carries out the reaction L-canavanine + L-ornithine = L-canaline + L-arginine + H(+). Its function is as follows. Involved in the biosynthesis of phaseolotoxin, a nonhost-specific toxin which is a key component in the development of the halo blight disease of beans. Catalyzes the transfer of an amidino group from arginine to lysine to produce one molecule of homoarginine and one molecule of ornithine, both being precursors in the biosynthesis of phaseolotoxin. Can also use L-canavanine as an alternative amidine donor with L-ornithine as amidine acceptor. This is L-arginine:L-lysine amidinotransferase from Pseudomonas savastanoi pv. phaseolicola (Pseudomonas syringae pv. phaseolicola).